A 371-amino-acid chain; its full sequence is DNA replication and repair protein RecF (371 aa).

Residue 30 to 37 coordinates ATP; sequence GANAQGKT.

It belongs to the RecF family.

Its subcellular location is the cytoplasm. Functionally, the RecF protein is involved in DNA metabolism; it is required for DNA replication and normal SOS inducibility. RecF binds preferentially to single-stranded, linear DNA. It also seems to bind ATP. This is DNA replication and repair protein RecF from Lacticaseibacillus casei (strain BL23) (Lactobacillus casei).